Consider the following 317-residue polypeptide: DNA-directed RNA polymerase subunit alpha 2 (317 aa).

The tract at residues 1–227 (MALENLLHPT…NQLRNIVDIE (227 aa)) is alpha N-terminal domain (alpha-NTD). An alpha C-terminal domain (alpha-CTD) region spans residues 241-317 (INPILLKHVE…TLIENWPQDL (77 aa)).

The protein belongs to the RNA polymerase alpha chain family. As to quaternary structure, homodimer. The RNAP catalytic core consists of 2 alpha, 1 beta, 1 beta' and 1 omega subunit. When a sigma factor is associated with the core the holoenzyme is formed, which can initiate transcription.

It catalyses the reaction RNA(n) + a ribonucleoside 5'-triphosphate = RNA(n+1) + diphosphate. In terms of biological role, DNA-dependent RNA polymerase catalyzes the transcription of DNA into RNA using the four ribonucleoside triphosphates as substrates. This Francisella tularensis subsp. holarctica (strain FTNF002-00 / FTA) protein is DNA-directed RNA polymerase subunit alpha 2.